Consider the following 150-residue polypeptide: Helix-loop-helix protein hlh-12 (150 aa).

Residues 1–24 (MAKKPRVTKLNTDRRSRANERERQ) form a disordered region. Residues 11–24 (NTDRRSRANERERQ) show a composition bias toward basic and acidic residues. Residues 13–26 (DRRSRANERERQRV) are basic motif. Residues 13 to 65 (DRRSRANERERQRVSEMNGMFDVLLNLLPPSHFKTRLSRVQILREATSYIIRL) form the bHLH domain. The helix-loop-helix motif stretch occupies residues 27–65 (SEMNGMFDVLLNLLPPSHFKTRLSRVQILREATSYIIRL).

Forms a heterodimer with helix-loop-helix protein hlh-2.

The protein localises to the nucleus. Transcription factor which binds the E box motif 5'-GCAGGTG-3'. Involved in migration of the gonadal leader cells; distal tip cells (DTCs) in hermaphrodites, and linker cells in males. Positively regulates expression of alpha integrin ina-1 and ADAMTS protease gon-1. The sequence is that of Helix-loop-helix protein hlh-12 from Caenorhabditis elegans.